Consider the following 302-residue polypeptide: tRNA dimethylallyltransferase 2 (302 aa).

6–13 (GPTACGKT) is an ATP binding site. Residue 8 to 13 (TACGKT) coordinates substrate. Interaction with substrate tRNA stretches follow at residues 31 to 34 (DSRQ) and 154 to 158 (QRAIR).

It belongs to the IPP transferase family. As to quaternary structure, monomer. The cofactor is Mg(2+).

It catalyses the reaction adenosine(37) in tRNA + dimethylallyl diphosphate = N(6)-dimethylallyladenosine(37) in tRNA + diphosphate. Functionally, catalyzes the transfer of a dimethylallyl group onto the adenine at position 37 in tRNAs that read codons beginning with uridine, leading to the formation of N6-(dimethylallyl)adenosine (i(6)A). The chain is tRNA dimethylallyltransferase 2 from Porphyromonas gingivalis (strain ATCC BAA-308 / W83).